We begin with the raw amino-acid sequence, 139 residues long: Transcription antitermination protein NusB (139 aa).

This sequence belongs to the NusB family.

Its function is as follows. Involved in transcription antitermination. Required for transcription of ribosomal RNA (rRNA) genes. Binds specifically to the boxA antiterminator sequence of the ribosomal RNA (rrn) operons. The protein is Transcription antitermination protein NusB of Escherichia coli (strain K12 / MC4100 / BW2952).